Reading from the N-terminus, the 316-residue chain is tRNA dimethylallyltransferase (316 aa).

13–20 (GPTASGKT) lines the ATP pocket. 15–20 (TASGKT) contacts substrate. Interaction with substrate tRNA regions lie at residues 38 to 41 (DSAL), 162 to 166 (QRINR), 243 to 248 (RCVGYR), and 276 to 283 (KRQITWLR).

It belongs to the IPP transferase family. In terms of assembly, monomer. It depends on Mg(2+) as a cofactor.

It carries out the reaction adenosine(37) in tRNA + dimethylallyl diphosphate = N(6)-dimethylallyladenosine(37) in tRNA + diphosphate. Catalyzes the transfer of a dimethylallyl group onto the adenine at position 37 in tRNAs that read codons beginning with uridine, leading to the formation of N6-(dimethylallyl)adenosine (i(6)A). The sequence is that of tRNA dimethylallyltransferase from Pasteurella multocida (strain Pm70).